The sequence spans 140 residues: FAD synthase (140 aa).

ATP-binding positions include 10–11 (TF), 15–18 (HPGH), and Asn93.

This sequence belongs to the archaeal FAD synthase family. Homodimer. A divalent metal cation is required as a cofactor.

The catalysed reaction is FMN + ATP + H(+) = FAD + diphosphate. It functions in the pathway cofactor biosynthesis; FAD biosynthesis; FAD from FMN: step 1/1. Catalyzes the transfer of the AMP portion of ATP to flavin mononucleotide (FMN) to produce flavin adenine dinucleotide (FAD) coenzyme. The sequence is that of FAD synthase from Methanocella arvoryzae (strain DSM 22066 / NBRC 105507 / MRE50).